The following is a 417-amino-acid chain: NADH-quinone oxidoreductase subunit D (417 aa).

The protein belongs to the complex I 49 kDa subunit family. NDH-1 is composed of 14 different subunits. Subunits NuoB, C, D, E, F, and G constitute the peripheral sector of the complex.

Its subcellular location is the cell inner membrane. The enzyme catalyses a quinone + NADH + 5 H(+)(in) = a quinol + NAD(+) + 4 H(+)(out). Its function is as follows. NDH-1 shuttles electrons from NADH, via FMN and iron-sulfur (Fe-S) centers, to quinones in the respiratory chain. The immediate electron acceptor for the enzyme in this species is believed to be ubiquinone. Couples the redox reaction to proton translocation (for every two electrons transferred, four hydrogen ions are translocated across the cytoplasmic membrane), and thus conserves the redox energy in a proton gradient. The sequence is that of NADH-quinone oxidoreductase subunit D from Burkholderia mallei (strain NCTC 10247).